The sequence spans 225 residues: NAD(P)H-quinone oxidoreductase subunit K, chloroplastic (225 aa).

[4Fe-4S] cluster-binding residues include Cys43, Cys44, Cys108, and Cys139.

It belongs to the complex I 20 kDa subunit family. In terms of assembly, NDH is composed of at least 16 different subunits, 5 of which are encoded in the nucleus. Requires [4Fe-4S] cluster as cofactor.

It is found in the plastid. The protein resides in the chloroplast thylakoid membrane. The enzyme catalyses a plastoquinone + NADH + (n+1) H(+)(in) = a plastoquinol + NAD(+) + n H(+)(out). It carries out the reaction a plastoquinone + NADPH + (n+1) H(+)(in) = a plastoquinol + NADP(+) + n H(+)(out). In terms of biological role, NDH shuttles electrons from NAD(P)H:plastoquinone, via FMN and iron-sulfur (Fe-S) centers, to quinones in the photosynthetic chain and possibly in a chloroplast respiratory chain. The immediate electron acceptor for the enzyme in this species is believed to be plastoquinone. Couples the redox reaction to proton translocation, and thus conserves the redox energy in a proton gradient. In Lactuca sativa (Garden lettuce), this protein is NAD(P)H-quinone oxidoreductase subunit K, chloroplastic.